An 891-amino-acid polypeptide reads, in one-letter code: DNA mismatch repair protein MutS (891 aa).

634–641 provides a ligand contact to ATP; sequence GPNMGGKS.

This sequence belongs to the DNA mismatch repair MutS family.

This protein is involved in the repair of mismatches in DNA. It is possible that it carries out the mismatch recognition step. This protein has a weak ATPase activity. The sequence is that of DNA mismatch repair protein MutS from Burkholderia mallei (strain NCTC 10247).